Reading from the N-terminus, the 660-residue chain is MATFKVLVLMILWITSIFNVRCEKFVTIPVNCSGEVDIDKMDVMCPNRYNLLSTNHLMEGEEVETFCRPSLRENDLLDGYLCRKQKWEVTCTETWYFVTDVKYQIIEVIPTENECMEERERKLKGEYIPPYYPPTNCVWNAIDTQERTFITLIEHPVIEDPVTMTLMDSKFTKPCNPKHNEVTICDTYNPLIKWISKETSGLNLHCQIKSWECIPVKLHHSHRNMMEALYLESPDFGIVDASKICNLTFCGYNGILLDNGEWWSIYRSGFTHGFLDNHILKNRRIEECKEKKPGYKLAKLDTTYIDLEFEIELEHEKCLGTLEKLQNGEYVTPLDLSYLSPSNPGKHYAYRLEYINTTEHKCVQLGFTYEGGDCRKMLDERDDHGAYYNWTTIKLQRVIRAVCYYHTFSMNLDESKHKYYDQDNRSIQIDEKFISEVLKSTPLIDRHEKYEGNLSWNGIIIESKNGHEKNVIVPSASQYNHVMINKILKRLDTVMYDSYKFDSESGSISYNKIVPIVREDNLQNAHRVDVIQYIKDKGSYIINGFTGWFSSLGKLMRWTIWGVGLFFSIFTLYKIIMILRKHSNDNVRKEFKETAGKVMIGQPIDTKSMSRTSIKANNKGKFDKVKDLFTPRSKTISHLTTDTLKEHTDGTYEELHFFNV.

The signal sequence occupies residues 1-22; it reads MATFKVLVLMILWITSIFNVRC. The Virion surface portion of the chain corresponds to 23–558; the sequence is EKFVTIPVNC…FSSLGKLMRW (536 aa). Residues 559-579 form a helical membrane-spanning segment; it reads TIWGVGLFFSIFTLYKIIMIL. Residues 580 to 660 are Intravirion-facing; it reads RKHSNDNVRK…TYEELHFFNV (81 aa).

This sequence belongs to the ephemerovirus glycoprotein family. In terms of assembly, homotrimer. Interacts with matrix protein. Post-translationally, glycosylated by host. Glycosylation is crucial for glycoprotein export at the cell surface.

It localises to the virion membrane. Attaches the virus to host cellular receptor, inducing endocytosis of the virion. In the endosome, the acidic pH induces conformational changes in the glycoprotein trimer, which trigger fusion between virus and cell membrane. The polypeptide is Glycoprotein (G) (Adelaide River virus (ARV)).